The sequence spans 271 residues: Solute carrier family 66 member 2 (271 aa).

The next 3 helical transmembrane spans lie at 7-27 (GWLL…AMVF), 49-69 (FSTH…LFWF), and 72-92 (HFES…LLML). A PQ-loop 1 domain is found at 14 to 80 (HQLVSWVAAG…RHFESPLLWQ (67 aa)). S110 bears the Phosphoserine mark. The next 3 helical transmembrane spans lie at 143-163 (FADY…ITYL), 168-188 (ALFV…LGVP), and 232-252 (VCGL…YAFA). The region spanning 149–215 (CVLAFTGVAG…MVLMWTSGDT (67 aa)) is the PQ-loop 2 domain.

It is found in the membrane. This Rattus norvegicus (Rat) protein is Solute carrier family 66 member 2 (Slc66a2).